Consider the following 533-residue polypeptide: Beta-1,4 N-acetylgalactosaminyltransferase 1 (533 aa).

Residues 1–7 (MWLGRRA) are Cytoplasmic-facing. The helical; Signal-anchor for type II membrane protein transmembrane segment at 8 to 25 (LCALVLLLACASLGLLYA) threads the bilayer. At 26–533 (STRDAPGLRL…KHRLQCMTSQ (508 aa)) the chain is on the lumenal side. 3 N-linked (GlcNAc...) asparagine glycosylation sites follow: Asn-79, Asn-179, and Asn-274. A disulfide bond links Cys-429 and Cys-476.

Belongs to the glycosyltransferase 2 family. In terms of assembly, homodimer; disulfide-linked.

It localises to the golgi apparatus membrane. The enzyme catalyses a ganglioside GM3 (d18:1(4E)) + UDP-N-acetyl-alpha-D-galactosamine = a ganglioside GM2 (d18:1(4E)) + UDP + H(+). It carries out the reaction a ganglioside GM3 + UDP-N-acetyl-alpha-D-galactosamine = a ganglioside GM2 + UDP + H(+). The catalysed reaction is a ganglioside GD3 + UDP-N-acetyl-alpha-D-galactosamine = a ganglioside GD2 + UDP + H(+). It catalyses the reaction a ganglioside GD3 (d18:1(4E)) + UDP-N-acetyl-alpha-D-galactosamine = a ganglioside GD2 (d18:1(4E)) + UDP + H(+). The enzyme catalyses a beta-D-Gal-(1-&gt;4)-beta-D-Glc-(1&lt;-&gt;1)-Cer(d18:1(4E)) + UDP-N-acetyl-alpha-D-galactosamine = a ganglioside GA2 (d18:1(4E)) + UDP + H(+). It carries out the reaction a ganglioside GD1a + UDP-N-acetyl-alpha-D-galactosamine = a ganglioside GalNAc-GD1a + UDP + H(+). The catalysed reaction is a ganglioside GT3 (d18:1(4E)) + UDP-N-acetyl-alpha-D-galactosamine = a ganglioside GT2 (d18:1(4E)) + UDP + H(+). It catalyses the reaction a beta-D-galactosyl-(1-&gt;4)-beta-D-glucosyl-(1&lt;-&gt;1)-ceramide + UDP-N-acetyl-alpha-D-galactosamine = a ganglioside GA2 + UDP + H(+). The enzyme catalyses a neolactoside IV(3)-alpha-NeuGc-nLc4Cer + UDP-N-acetyl-alpha-D-galactosamine = a neolactoside IV(4)-beta-GalNAc-IV(3)-alpha-NeuGc-nLc4Cer + UDP + H(+). The protein operates within sphingolipid metabolism. Its function is as follows. Involved in the biosynthesis of gangliosides GM2, GD2, GT2 and GA2 from GM3, GD3, GT3 and GA3, respectively. The chain is Beta-1,4 N-acetylgalactosaminyltransferase 1 from Homo sapiens (Human).